Consider the following 399-residue polypeptide: Fructose-bisphosphate aldolase 1, chloroplastic (399 aa).

The transit peptide at 1–48 (MASSTATMLKASPVKSDWVKGQSLLLRQPSSVSAIRSHVAPSALTVRA) directs the protein to the chloroplast. Arg-96 serves as a coordination point for substrate. The residue at position 158 (Ser-158) is a Phosphoserine. Lys-186 serves as a coordination point for substrate. A Phosphoserine modification is found at Ser-216. The active-site Proton acceptor is the Glu-226. Lys-268 acts as the Schiff-base intermediate with dihydroxyacetone-P in catalysis. 310–312 (SGG) is a substrate binding site. Residue Lys-395 is modified to N6,N6,N6-trimethyllysine.

The protein belongs to the class I fructose-bisphosphate aldolase family. Homotetramer. In terms of processing, can be trimethylated at Lys-395 by LSMT-L, but the trimethylation has no effect in vitro on the kinetic properties of the enzyme. S-glutathionylated. In terms of tissue distribution, highly expressed in rosettes leaves and cauline leaves.

The protein resides in the plastid. The protein localises to the chloroplast. It localises to the plastoglobule. It is found in the chloroplast stroma. It catalyses the reaction beta-D-fructose 1,6-bisphosphate = D-glyceraldehyde 3-phosphate + dihydroxyacetone phosphate. Its pathway is carbohydrate degradation; glycolysis; D-glyceraldehyde 3-phosphate and glycerone phosphate from D-glucose: step 4/4. Functionally, plays a key role in glycolysis and gluconeogenesis. This chain is Fructose-bisphosphate aldolase 1, chloroplastic, found in Arabidopsis thaliana (Mouse-ear cress).